The following is a 245-amino-acid chain: 14-3-3 protein zeta/delta (245 aa).

At Met-1 the chain carries N-acetylmethionine. Lys-3 is subject to N6-acetyllysine. Ser-58 carries the post-translational modification Phosphoserine; by PKA. An N6-acetyllysine modification is found at Lys-68. A phosphoserine mark is found at Ser-184, Ser-207, and Ser-210. The residue at position 232 (Thr-232) is a Phosphothreonine; by CK1.

This sequence belongs to the 14-3-3 family. In terms of assembly, homodimer. Heterodimerizes with YWHAE. Homo- and heterodimerization is inhibited by phosphorylation on Ser-58. Interacts with FOXO4, NOXA1, SSH1 ARHGEF2, CDK16 and BSPRY. Interacts with WEE1 (C-terminal). Interacts with MLF1 (phosphorylated form); the interaction retains it in the cytoplasm. Interacts with BAX; the interaction occurs in the cytoplasm. Under stress conditions, MAPK8-mediated phosphorylation releases BAX to mitochondria. Interacts with TP53; the interaction enhances p53 transcriptional activity. The Ser-58 phosphorylated form inhibits this interaction and p53 transcriptional activity. Interacts with ABL1 (phosphorylated form); the interaction retains ABL1 in the cytoplasm. Interacts with PKA-phosphorylated AANAT; the interaction modulates AANAT enzymatic activity by increasing affinity for arylalkylamines and acetyl-CoA and protecting the enzyme from dephosphorylation and proteasomal degradation. It may also prevent thiol-dependent inactivation. Interacts with AKT1; the interaction phosphorylates YWHAZ and modulates dimerization. Interacts with GAB2. Interacts with BCL2L11, SAMSN1 and TLK2. Interacts with phosphorylated RAF1; the interaction is inhibited when YWHAZ is phosphorylated on Thr-232. Interacts with Thr-phosphorylated ITGB2. Interacts with the 'Thr-369' phosphorylated form of DAPK2. Interacts with PI4KB, TBC1D22A and TBC1D22B. Interacts with ZFP36L1 (via phosphorylated form); this interaction occurs in a p38 MAPK- and AKT-signaling pathways. Interacts with SLITRK1. Interacts with AK5, LDB1, MADD, MARK3, PDE1A and SMARCB1. Interacts with YWHAZ. Interacts with MEFV. Interacts with ADAM22 (via C-terminus). The delta, brain-specific form differs from the zeta form in being phosphorylated. Phosphorylation on Ser-184 by MAPK8; promotes dissociation of BAX and translocation of BAX to mitochondria. Phosphorylation on Thr-232; inhibits binding of RAF1. Phosphorylated on Ser-58 by PKA and protein kinase C delta type catalytic subunit in a sphingosine-dependent fashion. Phosphorylation on Ser-58 by PKA; disrupts homodimerization and heterodimerization with YHAE and TP53.

The protein resides in the cytoplasm. The protein localises to the melanosome. Functionally, adapter protein implicated in the regulation of a large spectrum of both general and specialized signaling pathways. Binds to a large number of partners, usually by recognition of a phosphoserine or phosphothreonine motif. Binding generally results in the modulation of the activity of the binding partner. Promotes cytosolic retention and inactivation of TFEB transcription factor by binding to phosphorylated TFEB. Induces ARHGEF7 activity on RAC1 as well as lamellipodia and membrane ruffle formation. In neurons, regulates spine maturation through the modulation of ARHGEF7 activity. The protein is 14-3-3 protein zeta/delta (YWHAZ) of Bos taurus (Bovine).